An 89-amino-acid polypeptide reads, in one-letter code: Neurotoxin LmNaTx28 (89 aa).

The N-terminal stretch at 1-18 (MNLPTVLCIIALILGVRS) is a signal peptide. Residues 20–85 (KNGFFTKLGK…VADSSEKACQ (66 aa)) form the LCN-type CS-alpha/beta domain. 4 disulfides stabilise this stretch: Cys-33–Cys-57, Cys-43–Cys-62, Cys-47–Cys-64, and Cys-58–Cys-84.

This sequence belongs to the long (4 C-C) scorpion toxin superfamily. Sodium channel inhibitor family. Beta subfamily. As to expression, expressed by the venom gland.

The protein localises to the secreted. Its function is as follows. Binds voltage-independently at site-4 of sodium channels (Nav) and shift the voltage of activation toward more negative potentials thereby affecting sodium channel activation and promoting spontaneous and repetitive firing. This is Neurotoxin LmNaTx28 from Lychas mucronatus (Chinese swimming scorpion).